Here is an 875-residue protein sequence, read N- to C-terminus: Valine--tRNA ligase (875 aa).

A 'HIGH' region motif is present at residues 41-51; it reads PNVTGSLHMGH. The 'KMSKS' region motif lies at 525-529; that stretch reads KMSKS. Lys-528 is a binding site for ATP. A coiled-coil region spans residues 810–875; that stretch reads VDLELIKKNL…ERISITIKGL (66 aa).

Belongs to the class-I aminoacyl-tRNA synthetase family. ValS type 1 subfamily. Monomer.

Its subcellular location is the cytoplasm. It catalyses the reaction tRNA(Val) + L-valine + ATP = L-valyl-tRNA(Val) + AMP + diphosphate. Its function is as follows. Catalyzes the attachment of valine to tRNA(Val). As ValRS can inadvertently accommodate and process structurally similar amino acids such as threonine, to avoid such errors, it has a 'posttransfer' editing activity that hydrolyzes mischarged Thr-tRNA(Val) in a tRNA-dependent manner. The chain is Valine--tRNA ligase from Pelagibacter ubique (strain HTCC1062).